We begin with the raw amino-acid sequence, 402 residues long: Sex hormone-binding globulin (402 aa).

Positions 1-29 (MESRGPLATSRLLLLLLLLLLRHTRQGWA) are cleaved as a signal peptide. An O-linked (GalNAc...) threonine glycan is attached at Thr36. Laminin G-like domains are found at residues 45 to 217 (VHLS…LRSC) and 224 to 390 (GIFL…THSC). 2 cysteine pairs are disulfide-bonded: Cys193/Cys217 and Cys362/Cys390. N-linked (GlcNAc...) asparagine glycosylation is found at Asn380 and Asn396.

In terms of assembly, homodimer. In terms of processing, variant Asn-356 contains one N-linked (GlcNAc...) at position 356. In terms of tissue distribution, isoform 1 and isoform 2 are present in liver and testis.

It is found in the secreted. In terms of biological role, functions as an androgen transport protein, but may also be involved in receptor mediated processes. Each dimer binds one molecule of steroid. Specific for 5-alpha-dihydrotestosterone, testosterone, and 17-beta-estradiol. Regulates the plasma metabolic clearance rate of steroid hormones by controlling their plasma concentration. This chain is Sex hormone-binding globulin, found in Homo sapiens (Human).